Here is a 339-residue protein sequence, read N- to C-terminus: Anthranilate phosphoribosyltransferase (339 aa).

Residues Gly-79, 82 to 83 (GD), Thr-87, 89 to 92 (NIST), 107 to 115 (KHGNRAVSS), and Ser-119 contribute to the 5-phospho-alpha-D-ribose 1-diphosphate site. Gly-79 provides a ligand contact to anthranilate. Ser-91 is a Mg(2+) binding site. Asn-110 contributes to the anthranilate binding site. Residue Arg-165 coordinates anthranilate. 2 residues coordinate Mg(2+): Asp-224 and Glu-225.

This sequence belongs to the anthranilate phosphoribosyltransferase family. In terms of assembly, homodimer. Mg(2+) serves as cofactor.

The catalysed reaction is N-(5-phospho-beta-D-ribosyl)anthranilate + diphosphate = 5-phospho-alpha-D-ribose 1-diphosphate + anthranilate. It participates in amino-acid biosynthesis; L-tryptophan biosynthesis; L-tryptophan from chorismate: step 2/5. Catalyzes the transfer of the phosphoribosyl group of 5-phosphorylribose-1-pyrophosphate (PRPP) to anthranilate to yield N-(5'-phosphoribosyl)-anthranilate (PRA). The chain is Anthranilate phosphoribosyltransferase from Geobacillus thermodenitrificans (strain NG80-2).